A 350-amino-acid chain; its full sequence is S-adenosylmethionine:tRNA ribosyltransferase-isomerase (350 aa).

This sequence belongs to the QueA family. As to quaternary structure, monomer.

The protein resides in the cytoplasm. It catalyses the reaction 7-aminomethyl-7-carbaguanosine(34) in tRNA + S-adenosyl-L-methionine = epoxyqueuosine(34) in tRNA + adenine + L-methionine + 2 H(+). The protein operates within tRNA modification; tRNA-queuosine biosynthesis. Transfers and isomerizes the ribose moiety from AdoMet to the 7-aminomethyl group of 7-deazaguanine (preQ1-tRNA) to give epoxyqueuosine (oQ-tRNA). This Bacillus cereus (strain B4264) protein is S-adenosylmethionine:tRNA ribosyltransferase-isomerase.